The sequence spans 628 residues: Junctophilin-4 (628 aa).

At 1-606 (MSPGGKFDFD…RPAQPGAANP (606 aa)) the chain is on the cytoplasmic side. 6 MORN repeats span residues 50–72 (LGVF…KREG), 74–95 (GVER…KGRS), 96–117 (GVWE…FQDG), 118–140 (YGTE…KRHG), 141–163 (YGVR…RTSL), and 164–186 (DSGH…EGGS). Disordered regions lie at residues 158–214 (PRRT…RTPA) and 231–276 (GGRR…LIEG). Residues 170–179 (PPTPPPPLPL) are compositionally biased toward pro residues. 2 stretches are compositionally biased toward low complexity: residues 231–241 (GGRRSSLGSKR) and 253–272 (GSTG…APPA). MORN repeat units lie at residues 317 to 339 (YGRT…RLVH) and 340 to 362 (GGRV…KVDR). The segment at 415-602 (DLQPMLEAPG…AATERPAQPG (188 aa)) is disordered. The segment covering 432–443 (EGSDTEPLDEDS) has biased composition (acidic residues). 2 stretches are compositionally biased toward low complexity: residues 453–467 (PSEG…PASS) and 528–541 (GSPL…SSGS). Residues 607–628 (LVVGAVALLDLSLAFLFSQLLT) traverse the membrane as a helical; Anchor for type IV membrane protein segment.

Belongs to the junctophilin family.

The protein localises to the cell membrane. It is found in the endoplasmic reticulum membrane. Junctophilins contribute to the formation of junctional membrane complexes (JMCs) which link the plasma membrane with the endoplasmic or sarcoplasmic reticulum in excitable cells. Provides a structural foundation for functional cross-talk between the cell surface and intracellular calcium release channels. JPH4 is brain-specific and appears to have an active role in certain neurons involved in motor coordination and memory. This chain is Junctophilin-4 (JPH4), found in Homo sapiens (Human).